The primary structure comprises 144 residues: Large ribosomal subunit protein uL16 (144 aa).

Over residues 1–16 (MLQPKKTKFRRQQKGR) the composition is skewed to basic residues. The segment at 1–22 (MLQPKKTKFRRQQKGRMKGEAQ) is disordered.

The protein belongs to the universal ribosomal protein uL16 family. As to quaternary structure, part of the 50S ribosomal subunit.

Functionally, binds 23S rRNA and is also seen to make contacts with the A and possibly P site tRNAs. In Parabacteroides distasonis (strain ATCC 8503 / DSM 20701 / CIP 104284 / JCM 5825 / NCTC 11152), this protein is Large ribosomal subunit protein uL16.